Here is a 461-residue protein sequence, read N- to C-terminus: Calcitonin gene-related peptide type 1 receptor (461 aa).

The N-terminal stretch at 1 to 22 (MEKKCTLYFLVLLPFFMILVTA) is a signal peptide. Residues 23 to 139 (ELEESPEDSI…NTHEKVKTAL (117 aa)) are Extracellular-facing. Disulfide bonds link Cys-48–Cys-74, Cys-65–Cys-105, and Cys-88–Cys-127. 3 N-linked (GlcNAc...) asparagine glycosylation sites follow: Asn-66, Asn-118, and Asn-123. A helical membrane pass occupies residues 140 to 164 (NLFYLTIIGHGLSIASLLISLGIFF). Topologically, residues 165-175 (YFKSLSCQRIT) are cytoplasmic. Residues 176-198 (LHKNLFFSFVCNSVVTIIHLTAV) traverse the membrane as a helical segment. Residues 199 to 209 (ANNQALVATNP) lie on the Extracellular side of the membrane. The helical transmembrane segment at 210 to 238 (VSCKVSQFIHLYLMGCNYFWMLCEGIYLH) threads the bilayer. Topologically, residues 239–252 (TLIVVAVFAEKQHL) are cytoplasmic. The chain crosses the membrane as a helical span at residues 253–273 (MWYYFLGWGFPLIPACIHAIA). Topologically, residues 274 to 289 (RSLYYNDNCWISSDTH) are extracellular. A required for RAMP3 interaction region spans residues 288 to 289 (TH). The chain crosses the membrane as a helical span at residues 290–314 (LLYIIHGPICAALLVNLFFLLNIVR). The Cytoplasmic portion of the chain corresponds to 315 to 329 (VLITKLKVTHQAESN). A helical transmembrane segment spans residues 330-351 (LYMKAVRATLILVPLLGIEFVL). Residues 352–366 (IPWRPEGKIAEEVYD) lie on the Extracellular side of the membrane. Residues 367–387 (YIMHILMHFQGLLVSTIFCFF) form a helical membrane-spanning segment. Phosphoserine is present on residues Ser-420 and Ser-445.

This sequence belongs to the G-protein coupled receptor 2 family. Heterodimer of CALCRL and RAMP1; the receptor complex functions as CGRP receptor. Heterodimer of CALCRL and RAMP2 or CALCRL and RAMP3; the complexes function as adrenomedullin receptor. As to expression, predominantly expressed in the lung and heart.

Its subcellular location is the cell membrane. G protein-coupled receptor which specificity is determined by its interaction with receptor-activity-modifying proteins (RAMPs). Together with RAMP1, form the receptor complex for calcitonin-gene-related peptides CALCA/CGRP1 and CALCB/CGRP2. Together with RAMP2 or RAMP3, function as receptor complexes for adrenomedullin (ADM and ADM2). Ligand binding causes a conformation change that triggers signaling via guanine nucleotide-binding proteins (G proteins) and modulates the activity of downstream effectors. Activates cAMP-dependent pathway. The sequence is that of Calcitonin gene-related peptide type 1 receptor from Homo sapiens (Human).